A 91-amino-acid polypeptide reads, in one-letter code: Small ribosomal subunit protein uS15 (91 aa).

Belongs to the universal ribosomal protein uS15 family. Part of the 30S ribosomal subunit. Forms a bridge to the 50S subunit in the 70S ribosome, contacting the 23S rRNA.

Its function is as follows. One of the primary rRNA binding proteins, it binds directly to 16S rRNA where it helps nucleate assembly of the platform of the 30S subunit by binding and bridging several RNA helices of the 16S rRNA. Functionally, forms an intersubunit bridge (bridge B4) with the 23S rRNA of the 50S subunit in the ribosome. This chain is Small ribosomal subunit protein uS15, found in Rickettsia typhi (strain ATCC VR-144 / Wilmington).